We begin with the raw amino-acid sequence, 506 residues long: Sucrose transport protein SUT3 (506 aa).

Residues 1-20 are Cytoplasmic-facing; sequence MAVDMELDGGGDGKGKAPPQ. A helical membrane pass occupies residues 21 to 41; that stretch reads ISLSGLFLACMVAGGVQYGWA. The Extracellular segment spans residues 42–54; that stretch reads LQLSLLTPYVQTL. A helical membrane pass occupies residues 55–75; that stretch reads GIPHALTSVMWLCGPIAGLIV. At 76–94 the chain is on the cytoplasmic side; the sequence is QPCVGLYSDKCTSSLGRRR. Residues 95–115 traverse the membrane as a helical segment; sequence PFILTGCIIICISVIVIGFSS. Topologically, residues 116–135 are extracellular; sequence DIGYALGDTTEDCKVYRGPR. Residues 136 to 156 traverse the membrane as a helical segment; sequence YHAAAAFILGFWLLDFSNNTV. At 157–171 the chain is on the cytoplasmic side; it reads QGPARALMADLSGRH. Residues 172–192 form a helical membrane-spanning segment; that stretch reads GPSAANAIFCSWMALGNILGY. The Extracellular segment spans residues 193-220; that stretch reads SSGSTNDWHKWFPFLMTRACCEACANLK. Residues 221-241 traverse the membrane as a helical segment; the sequence is AAFLVAVVFLGLSTAVTMVFA. The Cytoplasmic portion of the chain corresponds to 242 to 275; sequence REVALDPVAAAKRNEGEASGLLAVFKGMKNLPVG. Residues 276–296 form a helical membrane-spanning segment; that stretch reads MPSVLIVTGLTWLSWFPFILF. Residues 297 to 327 are Extracellular-facing; the sequence is DTDWMGREIYHGRPDGSPAEVTAFQEGVRQG. A helical transmembrane segment spans residues 328-348; it reads AFGLLLNSIVLGISSFLIEPM. At 349 to 355 the chain is on the cytoplasmic side; it reads CRRLGAR. The chain crosses the membrane as a helical span at residues 356 to 376; it reads AVWVMSSAVVCVAMAAVSVLS. Topologically, residues 377-404 are extracellular; sequence AWSLGDFGGSVQDAARAPAEEGGVRASA. Residues 405–425 form a helical membrane-spanning segment; that stretch reads LALFVFLGLPFAVLCSVPFAV. The Cytoplasmic portion of the chain corresponds to 426–441; it reads TAQLAASRGGGQGLCT. Residues 442–462 form a helical membrane-spanning segment; it reads GVLNISIVVPQMAIALGAGPW. Residues 463-470 lie on the Extracellular side of the membrane; it reads DELFGEGN. Residues 471–491 form a helical membrane-spanning segment; the sequence is IPAFAMASVFAAAAAAAGVVL. Residues 492–506 lie on the Cytoplasmic side of the membrane; sequence LPKVSVRSVSMAGGH.

It belongs to the glycoside-pentoside-hexuronide (GPH) cation symporter transporter (TC 2.A.2.4) family. In terms of assembly, homodimer. Widely expressed. Highest expression in sink leaves and lowest in germinating seeds.

It is found in the cell membrane. Its pathway is glycan biosynthesis; sucrose metabolism. Functionally, responsible for the transport of sucrose into the cell, with the concomitant uptake of protons (symport system). May also transport other glucosides. This is Sucrose transport protein SUT3 (SUT3) from Oryza sativa subsp. japonica (Rice).